Consider the following 440-residue polypeptide: D-serine dehydratase (440 aa).

K116 is modified (N6-(pyridoxal phosphate)lysine).

The protein belongs to the serine/threonine dehydratase family. DsdA subfamily. Monomer. It depends on pyridoxal 5'-phosphate as a cofactor.

It carries out the reaction D-serine = pyruvate + NH4(+). The chain is D-serine dehydratase from Salmonella arizonae (strain ATCC BAA-731 / CDC346-86 / RSK2980).